We begin with the raw amino-acid sequence, 99 residues long: Small ribosomal subunit protein uS17 (99 aa).

This sequence belongs to the universal ribosomal protein uS17 family. Part of the 30S ribosomal subunit.

One of the primary rRNA binding proteins, it binds specifically to the 5'-end of 16S ribosomal RNA. In Thermosipho africanus (strain TCF52B), this protein is Small ribosomal subunit protein uS17.